A 210-amino-acid polypeptide reads, in one-letter code: Chaperone protein TorD (210 aa).

This sequence belongs to the TorD/DmsD family. TorD subfamily.

It localises to the cytoplasm. Functionally, involved in the biogenesis of TorA. Acts on TorA before the insertion of the molybdenum cofactor and, as a result, probably favors a conformation of the apoenzyme that is competent for acquiring the cofactor. This is Chaperone protein TorD from Salmonella choleraesuis (strain SC-B67).